The sequence spans 327 residues: RING-H2 finger protein ATL34 (327 aa).

A signal peptide spans 1–26 (MTIGKSPILLHHHVIFLLLLVLQVSG). A helical membrane pass occupies residues 47-67 (AVIIAMLMFTLLFSMLACCVC). Residues 128 to 170 (CAICLNEFEDEETLRLMPPCSHAFHASCIDVWLSSRSTCPVCR) form an RING-type; atypical zinc finger. The segment at 280–327 (LSHMKTLPQARSSREGYRSGSVGSERRGKGKEKEFGEGSFDRLKAEMV) is disordered. A compositionally biased stretch (basic and acidic residues) spans 303–327 (SERRGKGKEKEFGEGSFDRLKAEMV).

The protein belongs to the RING-type zinc finger family. ATL subfamily.

The protein localises to the membrane. It catalyses the reaction S-ubiquitinyl-[E2 ubiquitin-conjugating enzyme]-L-cysteine + [acceptor protein]-L-lysine = [E2 ubiquitin-conjugating enzyme]-L-cysteine + N(6)-ubiquitinyl-[acceptor protein]-L-lysine.. The protein operates within protein modification; protein ubiquitination. This Arabidopsis thaliana (Mouse-ear cress) protein is RING-H2 finger protein ATL34 (ATL34).